The sequence spans 322 residues: N-acetyl-gamma-glutamyl-phosphate reductase 2 (322 aa).

Residue Cys-117 is part of the active site.

Belongs to the NAGSA dehydrogenase family. Type 2 subfamily.

It localises to the cytoplasm. The catalysed reaction is N-acetyl-L-glutamate 5-semialdehyde + phosphate + NADP(+) = N-acetyl-L-glutamyl 5-phosphate + NADPH + H(+). It functions in the pathway amino-acid biosynthesis; L-arginine biosynthesis; N(2)-acetyl-L-ornithine from L-glutamate: step 3/4. Its function is as follows. Catalyzes the NADPH-dependent reduction of N-acetyl-5-glutamyl phosphate to yield N-acetyl-L-glutamate 5-semialdehyde. The chain is N-acetyl-gamma-glutamyl-phosphate reductase 2 from Nostoc sp. (strain PCC 7120 / SAG 25.82 / UTEX 2576).